The primary structure comprises 439 residues: AP-2 complex subunit mu (439 aa).

One can recognise an MHD domain in the interval 172–438 (RNELYIDVVE…LTKAGTYQNR (267 aa)).

The protein belongs to the adaptor complexes medium subunit family. Adaptor protein complex 2 (AP-2) is a heterotetramer composed of two large adaptins (alpha-type and beta-type subunits), a medium adaptin (mu-type subunit AP50) and a small adaptin (sigma-type subunit AP17). Phosphorylated.

The protein localises to the cell membrane. The protein resides in the membrane. It is found in the coated pit. In terms of biological role, component of the adaptor complexes which link clathrin to receptors in coated vesicles. Clathrin-associated protein complexes are believed to interact with the cytoplasmic tails of membrane proteins, leading to their selection and concentration. AP50 is a subunit of the plasma membrane adaptor. This is AP-2 complex subunit mu (apm2) from Dictyostelium discoideum (Social amoeba).